Reading from the N-terminus, the 194-residue chain is Small ribosomal subunit protein uS11m (194 aa).

This sequence belongs to the universal ribosomal protein uS11 family. Component of the mitochondrial small ribosomal subunit (mt-SSU). Mature mammalian 55S mitochondrial ribosomes consist of a small (28S) and a large (39S) subunit. The 28S small subunit contains a 12S ribosomal RNA (12S mt-rRNA) and 30 different proteins. The 39S large subunit contains a 16S rRNA (16S mt-rRNA), a copy of mitochondrial valine transfer RNA (mt-tRNA(Val)), which plays an integral structural role, and 52 different proteins.

It localises to the mitochondrion. The sequence is that of Small ribosomal subunit protein uS11m (MRPS11) from Homo sapiens (Human).